The sequence spans 110 residues: Minor capsid protein VP2 (110 aa).

This sequence belongs to the vesivirus VP2 protein family. In terms of assembly, homooligomer. The portal-like structure consists in 12 copies of VP2. Interacts with capsid protein VP1.

Its subcellular location is the virion. It is found in the host cytoplasm. In terms of biological role, minor structural protein that forms a portal-like structure at a unique three-fold axis of symmetry, following binding to the host receptor. The channel formed by VP2 may allow the delivery of the viral genome through the host endosomal membrane. This Vesicular exanthema of swine virus serotype A48 (isolate Swine/United States/A48/1948) (VESV) protein is Minor capsid protein VP2.